Here is a 148-residue protein sequence, read N- to C-terminus: Large ribosomal subunit protein bL9 (148 aa).

The protein belongs to the bacterial ribosomal protein bL9 family.

Its function is as follows. Binds to the 23S rRNA. The chain is Large ribosomal subunit protein bL9 from Caldicellulosiruptor bescii (strain ATCC BAA-1888 / DSM 6725 / KCTC 15123 / Z-1320) (Anaerocellum thermophilum).